We begin with the raw amino-acid sequence, 277 residues long: Putative thiosulfate sulfurtransferase mpst-4 (277 aa).

Rhodanese domains follow at residues 15-153 (NFGN…VVQS) and 155-243 (SKAE…QHLN). The Cysteine persulfide intermediate role is filled by C204.

It catalyses the reaction thiosulfate + hydrogen cyanide = thiocyanate + sulfite + 2 H(+). In Caenorhabditis elegans, this protein is Putative thiosulfate sulfurtransferase mpst-4.